A 216-amino-acid chain; its full sequence is Endoplasmic reticulum vesicle protein 25 (216 aa).

The first 20 residues, 1 to 20 (MASLKSLLSGFLLLAGAAQA), serve as a signal peptide directing secretion. Topologically, residues 21–185 (LKFDLEATSS…TNESTNNRVK (165 aa)) are lumenal. One can recognise a GOLD domain in the interval 36–126 (RRCIRNFVNK…RRHVELDIDI (91 aa)). A helical transmembrane segment spans residues 186–206 (WFGMATTFLLIALWGWQIMYL). Topologically, residues 207-216 (RAYFRSKHLI) are cytoplasmic.

This sequence belongs to the EMP24/GP25L family.

Its subcellular location is the endoplasmic reticulum membrane. The protein localises to the golgi apparatus membrane. Functionally, constituent of COPII-coated endoplasmic reticulum-derived transport vesicles. Required for efficient transport of a subset of secretory proteins to the Golgi. Facilitates retrograde transport from the Golgi to the endoplasmic reticulum. In Neurospora crassa (strain ATCC 24698 / 74-OR23-1A / CBS 708.71 / DSM 1257 / FGSC 987), this protein is Endoplasmic reticulum vesicle protein 25 (erv-1).